The sequence spans 315 residues: Taste receptor type 2 member 3 (315 aa).

Residues 1 to 5 (MGLTD) are Extracellular-facing. The chain crosses the membrane as a helical span at residues 6 to 26 (GVFLIVCGAQFTLGILXNGFI). Residues 27–41 (GLVNGRSWFKTKRMS) lie on the Cytoplasmic side of the membrane. The chain crosses the membrane as a helical span at residues 42–62 (LSDFIIATLALSRIILLCIIL). Residues 63-93 (TDSFLIVFSVKEHDSGIIMQLIDVFWTFTNH) lie on the Extracellular side of the membrane. The chain crosses the membrane as a helical span at residues 94-114 (LSIWFATCLGVLYCLKIASFS). Residues 115-127 (HPTFLWLKWRVSR) are Cytoplasmic-facing. The chain crosses the membrane as a helical span at residues 128-148 (VMVWMLLGALLLSCGSTASLI). At 149–185 (NEFKLYSVLRGIEATRNVTEHFRKKRNEYYLIHVLGT) the chain is on the extracellular side. An N-linked (GlcNAc...) asparagine glycan is attached at N165. The helical transmembrane segment at 186 to 206 (LWYLPPLVVSLASYFLLIFSL) threads the bilayer. The Cytoplasmic portion of the chain corresponds to 207-233 (GRHTRQMLQNSTSSRDPSTEAHKRAIR). A helical transmembrane segment spans residues 234–254 (IILSFFFLFLLYFLAFLIASF). At 255–265 (GNFLPETKMAK) the chain is on the extracellular side. A helical membrane pass occupies residues 266-286 (MIGEVMTMFYPAGHSFIVILG). The Cytoplasmic segment spans residues 287 to 315 (NSKLKQTFVEMLRCESGHLKPGSKGPIFS).

Belongs to the G-protein coupled receptor T2R family.

Its subcellular location is the membrane. Gustducin-coupled receptor implicated in the perception of bitter compounds in the oral cavity and the gastrointestinal tract. Signals through PLCB2 and the calcium-regulated cation channel TRPM5. This Papio hamadryas (Hamadryas baboon) protein is Taste receptor type 2 member 3 (TAS2R3).